The chain runs to 576 residues: SNF1-like protein kinase ssp2 (576 aa).

The region spanning 34-285 is the Protein kinase domain; the sequence is YIIRETLGEG…IQEIRRDPWF (252 aa). ATP-binding positions include 40–48 and lysine 63; that span reads LGEGSFGKV. Aspartate 156 functions as the Proton acceptor in the catalytic mechanism. Threonine 189 bears the Phosphothreonine mark. The interval 292–348 is auto-inhibitory domain (AID); the sequence is YLRPMEEVQGSYADSRIVSKLGEAMGFSEDYIVEALRSDENNEVKEAYNLLHENQVI. One can recognise a UBA domain in the interval 304–345; that stretch reads ADSRIVSKLGEAMGFSEDYIVEALRSDENNEVKEAYNLLHEN. The residue at position 442 (serine 442) is a Phosphoserine.

It belongs to the protein kinase superfamily. CAMK Ser/Thr protein kinase family. SNF1 subfamily. Component of the AMP-activated protein kinase complex also known as the SNF1 kinase complex (Snf1c), a heterotrimeric complex composed of a catalytic subunit alpha and 2 regulatory subunits beta (amk2) and gamma (cbs2). In terms of processing, phosphorylation at Thr-189 by ssp1 is required for nuclear entry in nutritionally stressed cells.

Its subcellular location is the cytoplasm. It is found in the nucleus. It catalyses the reaction L-seryl-[protein] + ATP = O-phospho-L-seryl-[protein] + ADP + H(+). The catalysed reaction is L-threonyl-[protein] + ATP = O-phospho-L-threonyl-[protein] + ADP + H(+). Its function is as follows. Serine/threonine protein kinase essential for release from glucose repression via the phosphorylation of scr1 upon glucose deprivation. Catalytic subunit of the AMP-activated protein kinase complex also known as the SNF1 kinase complex (Snf1c), a central regulator of cellular energy homeostasis, which, in response to a fall in intracellular ATP levels, activates energy-producing pathways and inhibits energy-consuming processes. The complex phosphorylates histone H3 to form H3S10ph, which promotes H3K14ac formation, leading to transcriptional activation through TBP recruitment to the promoters. Regulates proper cell cycle exit and sexual differentiation. Also regulates ste11 levels under nitrogen deprivation. The chain is SNF1-like protein kinase ssp2 from Schizosaccharomyces pombe (strain 972 / ATCC 24843) (Fission yeast).